A 302-amino-acid chain; its full sequence is Putative 2-dehydro-3-deoxy-D-gluconate aldolase YagE (302 aa).

Residues Ser-49 and Tyr-112 each act as charge relay system in the active site. The active-site Proton donor is Tyr-138. Lys-167 acts as the Schiff-base intermediate with substrate in catalysis.

It belongs to the DapA family. In terms of assembly, a dimer of dimers.

It localises to the cytoplasm. It catalyses the reaction 2-dehydro-3-deoxy-D-gluconate = D-glyceraldehyde + pyruvate. It carries out the reaction 2-dehydro-3-deoxy-D-arabinonate = glycolaldehyde + pyruvate. In terms of biological role, catalyzes the formation of 2-keto-3-deoxy-gluconate (KDG) from pyruvate and glyceraldehyde. May also function as a 2-dehydro-3-deoxy-D-pentonate aldolase. Overexpression leads to increased growth (over 2 hours) in the presence of the antibiotics norfloxacin, ampicillin and streptomycin. This is Putative 2-dehydro-3-deoxy-D-gluconate aldolase YagE (yagE) from Escherichia coli (strain K12).